A 528-amino-acid chain; its full sequence is Glucans biosynthesis protein G 2 (528 aa).

The first 44 residues, 1–44 (MRLHLTFNHSTPATGRKNTKHTLFFGSMLACIISIISLVVPAYG), serve as a signal peptide directing secretion.

It belongs to the OpgD/OpgG family.

Its subcellular location is the periplasm. It functions in the pathway glycan metabolism; osmoregulated periplasmic glucan (OPG) biosynthesis. Functionally, involved in the biosynthesis of osmoregulated periplasmic glucans (OPGs). The polypeptide is Glucans biosynthesis protein G 2 (opgG2) (Shewanella oneidensis (strain ATCC 700550 / JCM 31522 / CIP 106686 / LMG 19005 / NCIMB 14063 / MR-1)).